Reading from the N-terminus, the 1342-residue chain is DNA-directed RNA polymerase subunit beta (1342 aa).

This sequence belongs to the RNA polymerase beta chain family. As to quaternary structure, the RNAP catalytic core consists of 2 alpha, 1 beta, 1 beta' and 1 omega subunit. When a sigma factor is associated with the core the holoenzyme is formed, which can initiate transcription.

It catalyses the reaction RNA(n) + a ribonucleoside 5'-triphosphate = RNA(n+1) + diphosphate. Its function is as follows. DNA-dependent RNA polymerase catalyzes the transcription of DNA into RNA using the four ribonucleoside triphosphates as substrates. This is DNA-directed RNA polymerase subunit beta from Salmonella typhimurium (strain LT2 / SGSC1412 / ATCC 700720).